Consider the following 436-residue polypeptide: GTPase Der (436 aa).

EngA-type G domains are found at residues P4–Y167 and I175–N351. Residues G10–S17, D57–I61, N119–D122, G181–S188, D229–M233, and N294–D297 each bind GTP. The 85-residue stretch at T352–K436 folds into the KH-like domain.

It belongs to the TRAFAC class TrmE-Era-EngA-EngB-Septin-like GTPase superfamily. EngA (Der) GTPase family. Associates with the 50S ribosomal subunit.

Its function is as follows. GTPase that plays an essential role in the late steps of ribosome biogenesis. This chain is GTPase Der, found in Streptococcus pneumoniae (strain JJA).